Reading from the N-terminus, the 1277-residue chain is Neural cell adhesion molecule L1 (1277 aa).

The first 34 residues, 1-34 (MAHTQRQQGGSRGQWSRCLLLLLLLPLAAQPGRA), serve as a signal peptide directing secretion. Residues 35-1135 (AIQIPSSYYI…VQPSFATQGW (1101 aa)) lie on the Extracellular side of the membrane. Ig-like C2-type domains are found at residues 51 to 140 (PAIT…TAVS), 150 to 241 (PPVQ…EPIT), 256 to 344 (PQMM…YTVT), 349 to 437 (PYWT…TNVY), and 443 to 528 (PQIL…AEVE). 5 cysteine pairs are disulfide-bonded: cysteine 72–cysteine 129, cysteine 173–cysteine 224, cysteine 280–cysteine 328, cysteine 370–cysteine 421, and cysteine 465–cysteine 514. Asparagine 317 is a glycosylation site (N-linked (GlcNAc...) asparagine). Asparagine 503, asparagine 520, and asparagine 531 each carry an N-linked (GlcNAc...) asparagine glycan. The Ig-like C2-type 6 domain occupies 532–623 (RTVILSPPQA…DMVEASSTLT (92 aa)). Cysteine 554 and cysteine 607 are oxidised to a cystine. Fibronectin type-III domains are found at residues 630 to 725 (PPVH…TPAD), 730 to 824 (NPED…SGED), 829 to 931 (APLN…TPEG), 935 to 1030 (PPMS…TLEG), and 1032 to 1129 (PPAN…VQPS). Positions 714–740 (SKLSDLYKTPADAPDSNPEDVRSESTD) are disordered. 2 N-linked (GlcNAc...) asparagine glycosylation sites follow: asparagine 794 and asparagine 839. N-linked (GlcNAc...) asparagine glycans are attached at residues asparagine 1035, asparagine 1046, asparagine 1068, asparagine 1083, and asparagine 1108. A helical transmembrane segment spans residues 1136-1156 (FIGVVSAVVLLLLVLLILCFI). The Cytoplasmic segment spans residues 1157–1277 (KRSKGGKYSV…ATNGAPSFLN (121 aa)). 2 disordered regions span residues 1163-1216 (KYSV…LCSE) and 1232-1277 (NMDE…SFLN). Residues 1165-1201 (SVKDKEDGPMDSEARPMKDETFGEYRSLESDLEEKRT) are compositionally biased toward basic and acidic residues. Residues 1232–1242 (NMDESLASQFS) are compositionally biased toward polar residues. Over residues 1255–1277 (PDNSPLNPAANPPATNGAPSFLN) the composition is skewed to low complexity.

It belongs to the immunoglobulin superfamily. L1/neurofascin/NgCAM family.

The protein resides in the cell membrane. Its subcellular location is the cell projection. It is found in the growth cone. In terms of biological role, neural cell adhesion molecule involved in the dynamics of cell adhesion and in the generation of transmembrane signals at tyrosine kinase receptors. During brain development, critical in multiple processes, including neuronal migration, axonal growth and fasciculation, and synaptogenesis. In the mature brain, plays a role in the dynamics of neuronal structure and function, including synaptic plasticity. The protein is Neural cell adhesion molecule L1 (l1cam) of Takifugu rubripes (Japanese pufferfish).